Here is a 149-residue protein sequence, read N- to C-terminus: MELILLQKVANLGALGDKVTVKPGYGRNFLLPNGVAVPATEANLAAFQAKRAEYEAKAKSELDQAQARAAKFEGASVTVSAHASTEGKLYGSVGARDIAEAFTAVGLPLEKKEVILGEGAFRLIGEYDVLLHLHADVESTVKVIVQGVP.

The protein belongs to the bacterial ribosomal protein bL9 family.

In terms of biological role, binds to the 23S rRNA. In Xylella fastidiosa (strain M23), this protein is Large ribosomal subunit protein bL9.